The chain runs to 283 residues: Pantothenate synthetase (283 aa).

Residue 26 to 33 (MGNLHEGH) participates in ATP binding. The active-site Proton donor is the H33. Q57 contacts (R)-pantoate. Q57 contributes to the beta-alanine binding site. ATP is bound at residue 144 to 147 (GKKD). Residue Q150 participates in (R)-pantoate binding. 181–184 (LSSR) contributes to the ATP binding site.

It belongs to the pantothenate synthetase family. Homodimer.

The protein resides in the cytoplasm. The catalysed reaction is (R)-pantoate + beta-alanine + ATP = (R)-pantothenate + AMP + diphosphate + H(+). Its pathway is cofactor biosynthesis; (R)-pantothenate biosynthesis; (R)-pantothenate from (R)-pantoate and beta-alanine: step 1/1. Functionally, catalyzes the condensation of pantoate with beta-alanine in an ATP-dependent reaction via a pantoyl-adenylate intermediate. The sequence is that of Pantothenate synthetase from Variovorax paradoxus (strain S110).